The following is a 105-amino-acid chain: UPF0235 protein Mchl_2407 (105 aa).

The protein belongs to the UPF0235 family.

The sequence is that of UPF0235 protein Mchl_2407 from Methylorubrum extorquens (strain CM4 / NCIMB 13688) (Methylobacterium extorquens).